The primary structure comprises 500 residues: NAD(P)H-quinone oxidoreductase chain 4, chloroplastic (500 aa).

14 consecutive transmembrane segments (helical) span residues 4 to 24 (FPWLTIIVVLPIFAGSFIFFL), 35 to 55 (YTICICTLELLLTTYAFCYHF), 87 to 107 (IGPVLLTGFITTLATLAAWPV), 113 to 130 (LFHFLMLAMYSGQIGSFS), 134 to 154 (LLLFFIMWELELIPVYLLLSM), 167 to 187 (FILYTAGGSIFLLMGVLGVGL), 207 to 227 (VALEIIFYIGFFIAFAVKLPI), 242 to 262 (HYSTCMLLAGILLKMGAYGLI), 272 to 292 (AHSIFSPWLMIVGTIQIIYAA), 305 to 325 (IAYSSVSHMGFILIGIASITD), 330 to 350 (GAILQIISHGFIGAALFFLAG), 386 to 406 (LALPGMSGFVAEVIVFLGIIT), 416 to 436 (IVITFVMAIGMILTPIYLLSM), and 462 to 482 (LFVSISIFLPVIGIGMYPDFV).

It belongs to the complex I subunit 4 family.

The protein resides in the plastid. It is found in the chloroplast thylakoid membrane. The enzyme catalyses a plastoquinone + NADH + (n+1) H(+)(in) = a plastoquinol + NAD(+) + n H(+)(out). The catalysed reaction is a plastoquinone + NADPH + (n+1) H(+)(in) = a plastoquinol + NADP(+) + n H(+)(out). The chain is NAD(P)H-quinone oxidoreductase chain 4, chloroplastic from Guizotia abyssinica (Niger).